A 1067-amino-acid chain; its full sequence is MGVTQPAAPAYLRFPHPHGELVAFTAEDDVWLAPLDGGRAWRVSADNVPVNHPRISPDGTKVAWTSTRDGAPEVHVAPVEGGPAKRLTHWGSIRTQVRGWTADGRVLALSTYGQASLRRSWARALPLDGGPATTLPYGPVGDVAQGPHTVLLSAPMGREAAWWKRYRGGTAGKLWIDREDDGEFVRLHDGLDGNIEYPFWVGDRIAFLSDHEGTGALYSSLADGSDLRRHTPVDGFYARHAATDGSRVVYASAGELWTLDDLDGAEPRRLDIRLGGARVDLQSYPVNAARWFGSASPDHTARGSAVAVRGGVHWVTHRSGPARALAATPGVRNRLPRTFRVDGEEWVVWVTDAEGDDALEFAPATGLAPGATARRLAAGQLGRVLHLAVAPDGSRVAVASHDGRVLLVERESGEVREVDRSEDGDASGLVFSPDSSWLAWSHPGPEPLRQLKLANTTDLSVSEATPLRFKDYSPAFTLDGKHLAFLSTRSFDPVYDEHVFDLAFVEGARPYLITLAATTPSPFGPQRHGRPFETPDREETPDSEGTPTTRIDIEGLADRIVPFPVEAARYSRLRAAKDGVLWLRHPLTGVLGASRANPEDPDPNTELERYDLAQQRVEHLGGDADHFEVSGDGKRVLLWTDGRLKVVPSDRRASGDEDSDTNITVDLGRVRQTVEPAAEWRQMFDETGRIMRDHYWRADMNGVDWDGVLDRYRPVLDRVATHDDLVDLLWEVHGELGTSHAYVTPRGGHGSGARQGLLGADLSRHEDGAWRIDRVLPSETSDPDARSPLAAPGVAVRAGDAIVAVAGQAVDPVTGPGPLLVGTAGKPVELTVSPSGGGEVRHAVVVPLADEEPLRYHAWVADRRAYVHEKSGGRLGYLHVPDMQAPGWAQIHRDLRVEVAREGLVVDVRENRGGHTSQLVVEKLARRIVGWDLPRGMRPTSYPQDAPRGPVVAVANEFSGSDGDIVNAAIKALGIGPVVGVRTWGGVIGIDSRYRLVDGTLITQPKYAFWLEGYGWGVENHGVDPDVEVPQRPQDHAAGRDPQLDEAIALALAALEETPAKTPPSLP.

Positions 518 to 551 are disordered; the sequence is TTPSPFGPQRHGRPFETPDREETPDSEGTPTTRI. The span at 530 to 540 shows a compositional bias: basic and acidic residues; that stretch reads RPFETPDREET. The active-site Charge relay system is histidine 740. The segment at 754–851 is PDZ-like; the sequence is RQGLLGADLS…HAVVVPLADE (98 aa). Residue glycine 914 coordinates substrate. The active-site Nucleophile is serine 961. Glutamate 1019 acts as the Charge relay system in catalysis.

This sequence belongs to the peptidase S41B family. As to quaternary structure, forms a homohexameric complex; it is not known if it assembles into higher-order structures.

The protein localises to the cytoplasm. Stimulated by MgCl2. Functionally, degrades oligopeptides in a sequential manner. In Streptomyces coelicolor (strain ATCC BAA-471 / A3(2) / M145), this protein is Tricorn protease homolog 1 (tri1).